The sequence spans 1014 residues: Probable LRR receptor-like serine/threonine-protein kinase At1g07650 (1014 aa).

The first 23 residues, 1–23 (MIYLHRIYFIIVLFTLIFHGRLG), serve as a signal peptide directing secretion. Over 24–619 (FSDNNKLHEA…KPPVYYDTKD (596 aa)) the chain is Extracellular. Residues N76, N87, and N101 are each glycosylated (N-linked (GlcNAc...) asparagine). LRR repeat units follow at residues 89–112 (SCHV…EFSK), 113–137 (LRHL…WASM), 139–160 (LEDL…LTRL), 161–184 (TMLR…IGQL), 186–207 (HLEK…KLGL), 208–234 (LKNL…NWTR), 256–279 (LTSL…PLKN), 280–304 (LESI…IGDL), 305–327 (KKLK…SFEN), 329–352 (KKAD…FVER), and 354–376 (KNVD…DCNR). N165 is a glycosylation site (N-linked (GlcNAc...) asparagine). N-linked (GlcNAc...) asparagine glycosylation is found at N210, N220, and N231. 5 N-linked (GlcNAc...) asparagine glycosylation sites follow: N362, N389, N474, N481, and N511. Residues 516-539 (LHFAEIIFTDDNTLYSLGKRLFDI) form an LRR 12 repeat. The N-linked (GlcNAc...) asparagine glycan is linked to N570. A helical transmembrane segment spans residues 620–640 (IILKVGVPVAAATLLLFIIVG). Topologically, residues 641–1014 (VFWKKRRDKN…DAEEKTGLLD (374 aa)) are cytoplasmic. At T667 the chain carries Phosphothreonine. The 283-residue stretch at 678 to 960 (FDVTRKIGEG…EGKTAMQELL (283 aa)) folds into the Protein kinase domain. ATP contacts are provided by residues 684-692 (IGEGGFGSV) and K706. A Phosphotyrosine modification is found at Y751. D805 serves as the catalytic Proton acceptor. Residues S809 and S838 each carry the phosphoserine modification. Phosphothreonine occurs at positions 839 and 844. A Phosphotyrosine modification is found at Y852. Phosphoserine is present on S989. Polar residues predominate over residues 989–1002 (SFSTSGPRTASANS). The tract at residues 989–1014 (SFSTSGPRTASANSLVDAEEKTGLLD) is disordered.

This sequence belongs to the protein kinase superfamily. Ser/Thr protein kinase family.

The protein localises to the membrane. The catalysed reaction is L-seryl-[protein] + ATP = O-phospho-L-seryl-[protein] + ADP + H(+). It catalyses the reaction L-threonyl-[protein] + ATP = O-phospho-L-threonyl-[protein] + ADP + H(+). The sequence is that of Probable LRR receptor-like serine/threonine-protein kinase At1g07650 from Arabidopsis thaliana (Mouse-ear cress).